The sequence spans 140 residues: Cytochrome b (140 aa).

Residues 38–58 form a helical membrane-spanning segment; that stretch reads FFALHFLLPFVLAALVIMHLI. 2 residues coordinate heme b: histidine 42 and histidine 56. Histidine 61 provides a ligand contact to a ubiquinone. Residues 85–105 form a helical membrane-spanning segment; the sequence is FVFKDLVTIFIFFIVLSIFVF.

This sequence belongs to the cytochrome b family. As to quaternary structure, fungal cytochrome b-c1 complex contains 10 subunits; 3 respiratory subunits, 2 core proteins and 5 low-molecular weight proteins. Cytochrome b-c1 complex is a homodimer. Heme b serves as cofactor.

The protein resides in the mitochondrion inner membrane. In terms of biological role, component of the ubiquinol-cytochrome c reductase complex (complex III or cytochrome b-c1 complex) that is part of the mitochondrial respiratory chain. The b-c1 complex mediates electron transfer from ubiquinol to cytochrome c. Contributes to the generation of a proton gradient across the mitochondrial membrane that is then used for ATP synthesis. In Aspergillus terreus, this protein is Cytochrome b (cob).